The primary structure comprises 92 residues: Muconolactone Delta-isomerase (92 aa).

The protein belongs to the muconolactone Delta-isomerase family. Homodecamer.

It catalyses the reaction (S)-muconolactone = (4,5-dihydro-5-oxofuran-2-yl)-acetate. Its pathway is aromatic compound metabolism; beta-ketoadipate pathway; 5-oxo-4,5-dihydro-2-furylacetate from catechol: step 3/3. In Cupriavidus pinatubonensis (strain JMP 134 / LMG 1197) (Cupriavidus necator (strain JMP 134)), this protein is Muconolactone Delta-isomerase (catC).